The sequence spans 409 residues: Elongation factor Tu, cyanelle (409 aa).

A tr-type G domain is found at 10-214; sequence KPHVNIGTIG…AVDEYIPTPE (205 aa). Positions 19-26 are G1; the sequence is GHVDHGKT. 19–26 lines the GTP pocket; that stretch reads GHVDHGKT. T26 lines the Mg(2+) pocket. The G2 stretch occupies residues 60–64; the sequence is GITIN. Positions 81–84 are G3; it reads DCPG. Residues 81-85 and 136-139 contribute to the GTP site; these read DCPGH and NKED. The segment at 136–139 is G4; it reads NKED. Positions 174–176 are G5; it reads SAL.

This sequence belongs to the TRAFAC class translation factor GTPase superfamily. Classic translation factor GTPase family. EF-Tu/EF-1A subfamily.

It is found in the plastid. It localises to the cyanelle. It carries out the reaction GTP + H2O = GDP + phosphate + H(+). GTP hydrolase that promotes the GTP-dependent binding of aminoacyl-tRNA to the A-site of ribosomes during protein biosynthesis. The sequence is that of Elongation factor Tu, cyanelle (tufA) from Cyanophora paradoxa.